We begin with the raw amino-acid sequence, 258 residues long: UPF0246 protein CJA_0191 (258 aa).

The protein belongs to the UPF0246 family.

In Cellvibrio japonicus (strain Ueda107) (Pseudomonas fluorescens subsp. cellulosa), this protein is UPF0246 protein CJA_0191.